A 316-amino-acid chain; its full sequence is Lys-63-specific deubiquitinase BRCC36 (316 aa).

Position 2 is an N-acetylalanine (Ala2). In terms of domain architecture, MPN spans 12–179; the sequence is VHLESDAFLV…YTCFQSIQAQ (168 aa). Zn(2+)-binding residues include His122, His124, and Asp135. Positions 122 to 135 match the JAMM motif motif; that stretch reads HSHPHITVWPSHVD. A Phosphoserine modification is found at Ser258.

This sequence belongs to the peptidase M67A family. BRCC36 subfamily. As to quaternary structure, component of the ARISC complex, at least composed of UIMC1/RAP80, ABRAXAS1, BRCC3/BRCC36, BABAM2 and BABAM1/NBA1. Component of the BRCA1-A complex, at least composed of BRCA1, BARD1, UIMC1/RAP80, ABRAXAS1, BRCC3/BRCC36, babam2 and BABAM1/NBA1. In the BRCA1-A complex, interacts directly with ABRAXAS1 and babam2. Component of the BRISC complex, at least composed of ABRAXAS2, BRCC3/BRCC36, BABAM2 and BABAM1/NBA1. Identified in a complex with SHMT2 and the other subunits of the BRISC complex. In the BRISC complex, interacts directly with ABRAXAS2. Identified in a complex with ABRAXAS2 and NUMA1. The BRISC complex interacts with the CSN complex. Component of the BRCA1/BRCA2 containing complex (BRCC), which also contains BRCA1, BRCA2, BARD1, BABAM2 and RAD51. BRCC is a ubiquitin E3 ligase complex that enhances cellular survival following DNA damage. Interacts with BRCA1. Binds polyubiquitin. Interacts with PWWP2B. Interacts with HDAC1; this interaction is enhanced in the presence of PWWP2B. The cofactor is Zn(2+). In terms of tissue distribution, heart, brain, placenta, lung, liver, skeletal muscle, kidney and pancreas. Aberrantly expressed in the vast majority of breast tumors.

It is found in the nucleus. The protein resides in the cytoplasm. Its subcellular location is the cytoskeleton. It localises to the spindle pole. In terms of biological role, metalloprotease that specifically cleaves 'Lys-63'-linked polyubiquitin chains. Does not have activity toward 'Lys-48'-linked polyubiquitin chains. Component of the BRCA1-A complex, a complex that specifically recognizes 'Lys-63'-linked ubiquitinated histones H2A and H2AX at DNA lesions sites, leading to target the BRCA1-BARD1 heterodimer to sites of DNA damage at double-strand breaks (DSBs). In the BRCA1-A complex, it specifically removes 'Lys-63'-linked ubiquitin on histones H2A and H2AX, antagonizing the RNF8-dependent ubiquitination at double-strand breaks (DSBs). Catalytic subunit of the BRISC complex, a multiprotein complex that specifically cleaves 'Lys-63'-linked ubiquitin in various substrates. Mediates the specific 'Lys-63'-specific deubiquitination associated with the COP9 signalosome complex (CSN), via the interaction of the BRISC complex with the CSN complex. The BRISC complex is required for normal mitotic spindle assembly and microtubule attachment to kinetochores via its role in deubiquitinating NUMA1. Plays a role in interferon signaling via its role in the deubiquitination of the interferon receptor IFNAR1; deubiquitination increases IFNAR1 activity by enhancing its stability and cell surface expression. Acts as a regulator of the NLRP3 inflammasome by mediating deubiquitination of NLRP3, leading to NLRP3 inflammasome assembly. Down-regulates the response to bacterial lipopolysaccharide (LPS) via its role in IFNAR1 deubiquitination. Deubiquitinates HDAC1 and PWWP2B leading to their stabilization. The polypeptide is Lys-63-specific deubiquitinase BRCC36 (BRCC3) (Homo sapiens (Human)).